The sequence spans 287 residues: Polyamine aminopropyltransferase (287 aa).

A PABS domain is found at 5–238; that stretch reads EIWYETLHAN…GIMTFAWASQ (234 aa). Residue Q33 participates in S-methyl-5'-thioadenosine binding. Spermidine-binding residues include H64 and D88. Residues E108 and 140–141 each bind S-methyl-5'-thioadenosine; that span reads DG. The active-site Proton acceptor is the D158. Position 158-161 (158-161) interacts with spermidine; that stretch reads DCTD. P165 is a binding site for S-methyl-5'-thioadenosine.

Belongs to the spermidine/spermine synthase family. As to quaternary structure, homodimer or homotetramer.

The protein localises to the cytoplasm. It catalyses the reaction S-adenosyl 3-(methylsulfanyl)propylamine + putrescine = S-methyl-5'-thioadenosine + spermidine + H(+). It functions in the pathway amine and polyamine biosynthesis; spermidine biosynthesis; spermidine from putrescine: step 1/1. Catalyzes the irreversible transfer of a propylamine group from the amino donor S-adenosylmethioninamine (decarboxy-AdoMet) to putrescine (1,4-diaminobutane) to yield spermidine. The sequence is that of Polyamine aminopropyltransferase from Serratia proteamaculans (strain 568).